Here is a 1134-residue protein sequence, read N- to C-terminus: Translation initiation factor IF-2 (1134 aa).

Disordered regions lie at residues 55 to 465 and 491 to 524; these read AQKS…HIIG and LARP…QRQR. Composition is skewed to polar residues over residues 56 to 65, 83 to 105, 137 to 147, 208 to 234, and 251 to 264; these read QKSSNSSSPP, SPPT…SSLK, PSISKNNSLKV, QIKQ…IQTN, and VQSQ…NNNL. 2 stretches are compositionally biased toward basic and acidic residues: residues 391 to 403 and 438 to 450; these read KRGD…KKDG and PDWD…EALR. Basic residues-rich tracts occupy residues 495–504 and 511–524; these read GKPKASKKSG and LRKR…QRQR. Residues 626–798 enclose the tr-type G domain; that stretch reads RRPPVVTVMG…ILLVTEVEDL (173 aa). Residues 635–642 form a G1 region; it reads GHVDHGKT. A GTP-binding site is contributed by 635 to 642; sequence GHVDHGKT. Positions 660–664 are G2; the sequence is GITQH. Positions 685–688 are G3; the sequence is DTPG. Residues 685–689 and 739–742 contribute to the GTP site; these read DTPGH and NKID. A G4 region spans residues 739 to 742; sequence NKID. The tract at residues 775–777 is G5; sequence SAI.

Belongs to the TRAFAC class translation factor GTPase superfamily. Classic translation factor GTPase family. IF-2 subfamily.

It localises to the cytoplasm. Its function is as follows. One of the essential components for the initiation of protein synthesis. Protects formylmethionyl-tRNA from spontaneous hydrolysis and promotes its binding to the 30S ribosomal subunits. Also involved in the hydrolysis of GTP during the formation of the 70S ribosomal complex. The protein is Translation initiation factor IF-2 of Prochlorococcus marinus (strain SARG / CCMP1375 / SS120).